We begin with the raw amino-acid sequence, 938 residues long: Isoleucine--tRNA ligase (938 aa).

The short motif at 58 to 68 (PYANGSIHIGH) is the 'HIGH' region element. Glu-561 is an L-isoleucyl-5'-AMP binding site. Residues 602–606 (KMSKS) carry the 'KMSKS' region motif. Lys-605 is an ATP binding site. Residues Cys-901, Cys-904, Cys-921, and Cys-924 each contribute to the Zn(2+) site.

This sequence belongs to the class-I aminoacyl-tRNA synthetase family. IleS type 1 subfamily. Monomer. Zn(2+) is required as a cofactor.

It is found in the cytoplasm. It carries out the reaction tRNA(Ile) + L-isoleucine + ATP = L-isoleucyl-tRNA(Ile) + AMP + diphosphate. Catalyzes the attachment of isoleucine to tRNA(Ile). As IleRS can inadvertently accommodate and process structurally similar amino acids such as valine, to avoid such errors it has two additional distinct tRNA(Ile)-dependent editing activities. One activity is designated as 'pretransfer' editing and involves the hydrolysis of activated Val-AMP. The other activity is designated 'posttransfer' editing and involves deacylation of mischarged Val-tRNA(Ile). In Sodalis glossinidius (strain morsitans), this protein is Isoleucine--tRNA ligase.